We begin with the raw amino-acid sequence, 155 residues long: Ribosomal RNA large subunit methyltransferase H (155 aa).

S-adenosyl-L-methionine contacts are provided by residues Leu72, Gly103, and 122-127 (LSALTL).

It belongs to the RNA methyltransferase RlmH family. In terms of assembly, homodimer.

Its subcellular location is the cytoplasm. It carries out the reaction pseudouridine(1915) in 23S rRNA + S-adenosyl-L-methionine = N(3)-methylpseudouridine(1915) in 23S rRNA + S-adenosyl-L-homocysteine + H(+). Specifically methylates the pseudouridine at position 1915 (m3Psi1915) in 23S rRNA. This chain is Ribosomal RNA large subunit methyltransferase H, found in Escherichia fergusonii (strain ATCC 35469 / DSM 13698 / CCUG 18766 / IAM 14443 / JCM 21226 / LMG 7866 / NBRC 102419 / NCTC 12128 / CDC 0568-73).